Consider the following 511-residue polypeptide: Protein phosphatase 2C 16 (511 aa).

Positions 1–22 are cleaved as a signal peptide; sequence MEEMTPAVAMTLSLAANTMCES. The PPM-type phosphatase domain occupies 189 to 501; sequence LWGTVSIQGN…DNISIIVIDL (313 aa). Asp243, Gly244, Asp432, and Asp492 together coordinate Mn(2+).

It belongs to the PP2C family. Interacts with SWI3B (via N-terminus). Interacts with ABA-bounded PYR1, PYL1, PYL2, PYL3, PYL4, PYL5, PYL6, PYL8 and PYL9, and with free PYL2, PYL3, PYL4, PYL10 and PYL13. Requires Mg(2+) as cofactor. The cofactor is Mn(2+). As to expression, expressed in seeds, roots, stems, leaves and flowers, especially in meristematic tissues, guard cells, embryo and siliques.

Its subcellular location is the cytoplasm. It localises to the nucleus. The enzyme catalyses O-phospho-L-seryl-[protein] + H2O = L-seryl-[protein] + phosphate. It catalyses the reaction O-phospho-L-threonyl-[protein] + H2O = L-threonyl-[protein] + phosphate. With respect to regulation, repressed by PYR/PYL/RCAR ABA receptors in an ABA-dependent manner. In terms of biological role, key component and repressor of the abscisic acid (ABA) signaling pathway that regulates numerous ABA responses, such as stomatal closure, seed germination and inhibition of vegetative growth. Confers enhanced sensitivity to drought. This Arabidopsis thaliana (Mouse-ear cress) protein is Protein phosphatase 2C 16 (HAB1).